Consider the following 212-residue polypeptide: Imidazole glycerol phosphate synthase subunit HisH (212 aa).

A Glutamine amidotransferase type-1 domain is found at Met1–Ala212. Cys79 functions as the Nucleophile in the catalytic mechanism. Active-site residues include His187 and Glu189.

In terms of assembly, heterodimer of HisH and HisF.

It is found in the cytoplasm. The catalysed reaction is 5-[(5-phospho-1-deoxy-D-ribulos-1-ylimino)methylamino]-1-(5-phospho-beta-D-ribosyl)imidazole-4-carboxamide + L-glutamine = D-erythro-1-(imidazol-4-yl)glycerol 3-phosphate + 5-amino-1-(5-phospho-beta-D-ribosyl)imidazole-4-carboxamide + L-glutamate + H(+). It catalyses the reaction L-glutamine + H2O = L-glutamate + NH4(+). It participates in amino-acid biosynthesis; L-histidine biosynthesis; L-histidine from 5-phospho-alpha-D-ribose 1-diphosphate: step 5/9. Its function is as follows. IGPS catalyzes the conversion of PRFAR and glutamine to IGP, AICAR and glutamate. The HisH subunit catalyzes the hydrolysis of glutamine to glutamate and ammonia as part of the synthesis of IGP and AICAR. The resulting ammonia molecule is channeled to the active site of HisF. The polypeptide is Imidazole glycerol phosphate synthase subunit HisH (Maridesulfovibrio salexigens (strain ATCC 14822 / DSM 2638 / NCIMB 8403 / VKM B-1763) (Desulfovibrio salexigens)).